An 813-amino-acid chain; its full sequence is Leucine--tRNA ligase (813 aa).

A 'HIGH' region motif is present at residues 42–52; that stretch reads PYTSGNLHIGH. Residues 580–584 carry the 'KMSKS' region motif; sequence KMSKS. ATP is bound at residue Lys-583.

The protein belongs to the class-I aminoacyl-tRNA synthetase family.

The protein resides in the cytoplasm. It catalyses the reaction tRNA(Leu) + L-leucine + ATP = L-leucyl-tRNA(Leu) + AMP + diphosphate. The sequence is that of Leucine--tRNA ligase from Dehalococcoides mccartyi (strain ATCC BAA-2100 / JCM 16839 / KCTC 5957 / BAV1).